The chain runs to 280 residues: MNDVRKILLRISYDGTRFCGWQKQVSGSRERAPSVQGELEKVAEKIHHQKIAVIGSGRTDSGVHAVGQAAHFCTPMRNILAYRFIPAFNSLLPHSIRITDAREVSSQLHARFSAVMRTYRYHLHCAPVAYAHELPYCWHIARMPDIHLLNQYAATLKGELDCTSFAAAGDKSASKSRYFYDTHFSFNHRVLTFEISANAFLWKMVRSLTGTLLHCEKKRCSVREFVRILHAKDRRLQGPPHRRMGYSYGTSVTPNTYSVQNRNTLARELASTGNARWKTY.

The active-site Nucleophile is Asp-60. Tyr-119 is a binding site for substrate.

Belongs to the tRNA pseudouridine synthase TruA family. As to quaternary structure, homodimer.

It catalyses the reaction uridine(38/39/40) in tRNA = pseudouridine(38/39/40) in tRNA. Its function is as follows. Formation of pseudouridine at positions 38, 39 and 40 in the anticodon stem and loop of transfer RNAs. The sequence is that of tRNA pseudouridine synthase A from Treponema pallidum (strain Nichols).